Consider the following 530-residue polypeptide: Pancreatic secretory granule membrane major glycoprotein GP2 (530 aa).

An N-terminal signal peptide occupies residues 1–21; it reads MVACDLLWLAAASCLLTLVFP. N-linked (GlcNAc...) asparagine glycosylation occurs at asparagine 33. 11 cysteine pairs are disulfide-bonded: cysteine 41–cysteine 52, cysteine 56–cysteine 150, cysteine 78–cysteine 168, cysteine 100–cysteine 138, cysteine 106–cysteine 173, cysteine 131–cysteine 139, cysteine 183–cysteine 193, cysteine 187–cysteine 202, cysteine 204–cysteine 234, cysteine 222–cysteine 313, and cysteine 254–cysteine 277. A D10C region spans residues 54-74; the sequence is DPCQNHTVLNDPSRSTENTVS. N-linked (GlcNAc...) asparagine glycans are attached at residues asparagine 58 and asparagine 127. Residues 179–223 enclose the EGF-like domain; the sequence is APKKCEIACRPEEECVFQNNSWTCVCRQDLNVSDTLSLQPLLDCG. N-linked (GlcNAc...) asparagine glycosylation is found at asparagine 197 and asparagine 209. The segment at 221–314 is ZP-N; the sequence is DCGANEIKVK…FLVNVNFQCA (94 aa). A ZP domain is found at 221–477; the sequence is DCGANEIKVK…PSCSTSRLRS (257 aa). Residues asparagine 284 and asparagine 320 are each glycosylated (N-linked (GlcNAc...) asparagine). The tract at residues 315–338 is flexible ZP-N/ZP-C linker; the sequence is YPLDMNVSLQTALQPIVSSLNVDV. The interval 339-350 is internal hydrophobic patch (IHP); that stretch reads GGAGEFTVTMAL. A ZP-C region spans residues 339-477; it reads GGAGEFTVTM…PSCSTSRLRS (139 aa). Intrachain disulfides connect cysteine 394/cysteine 454, cysteine 415/cysteine 470, and cysteine 459/cysteine 466. The interval 484–492 is external hydrophobic patch (EHP); that stretch reads LTRVLDIGP. The GPI-anchor amidated asparagine moiety is linked to residue asparagine 505. A propeptide spans 506–530 (removed in mature form); that stretch reads GTPRNTGFLLAWPTFFLPVFLAWLF.

In terms of assembly, interacts with SYCN. Interacts with bacterial adhesin fimH. In terms of processing, N-glycosylated. Expressed in pancreas.

It localises to the zymogen granule membrane. It is found in the secreted. The protein localises to the cell membrane. Its subcellular location is the apical cell membrane. The protein resides in the membrane raft. It localises to the endosome. Its function is as follows. Functions as an intestinal M-cell transcytotic receptor specific of type-I-piliated bacteria that participates in the mucosal immune response toward these bacteria. At the apical membrane of M-cells it binds fimH, a protein of the bacteria type I pilus tip. Internalizes bound bacteria, like E.coli and S.typhimurium, from the lumen of the intestine and delivers them, through M-cells, to the underlying organized lymphoid follicles where they are captured by antigen-presenting dendritic cells to elicit a mucosal immune response. This Rattus norvegicus (Rat) protein is Pancreatic secretory granule membrane major glycoprotein GP2.